The following is a 429-amino-acid chain: Adenylosuccinate synthetase (429 aa).

GTP-binding positions include 13-19 (GDEGKGK) and 41-43 (GHT). The active-site Proton acceptor is D14. Mg(2+) contacts are provided by D14 and G41. IMP is bound by residues 14-17 (DEGK), 39-42 (NAGH), T130, R144, Q225, T240, and R304. H42 (proton donor) is an active-site residue. Residue 300–306 (ATTGRAR) participates in substrate binding. Residues R306, 332–334 (KLD), and 413–415 (STG) each bind GTP.

This sequence belongs to the adenylosuccinate synthetase family. In terms of assembly, homodimer. Mg(2+) serves as cofactor.

Its subcellular location is the cytoplasm. The catalysed reaction is IMP + L-aspartate + GTP = N(6)-(1,2-dicarboxyethyl)-AMP + GDP + phosphate + 2 H(+). It functions in the pathway purine metabolism; AMP biosynthesis via de novo pathway; AMP from IMP: step 1/2. Functionally, plays an important role in the de novo pathway of purine nucleotide biosynthesis. Catalyzes the first committed step in the biosynthesis of AMP from IMP. This chain is Adenylosuccinate synthetase, found in Pseudomonas fluorescens (strain SBW25).